A 901-amino-acid polypeptide reads, in one-letter code: Protein translocase subunit SecA (901 aa).

ATP-binding positions include glutamine 87, 105-109, and aspartate 512; that span reads GEGKT. Cysteine 885, cysteine 887, cysteine 896, and histidine 897 together coordinate Zn(2+).

This sequence belongs to the SecA family. In terms of assembly, monomer and homodimer. Part of the essential Sec protein translocation apparatus which comprises SecA, SecYEG and auxiliary proteins SecDF-YajC and YidC. Requires Zn(2+) as cofactor.

It localises to the cell inner membrane. The protein resides in the cytoplasm. It catalyses the reaction ATP + H2O + cellular proteinSide 1 = ADP + phosphate + cellular proteinSide 2.. Functionally, part of the Sec protein translocase complex. Interacts with the SecYEG preprotein conducting channel. Has a central role in coupling the hydrolysis of ATP to the transfer of proteins into and across the cell membrane, serving both as a receptor for the preprotein-SecB complex and as an ATP-driven molecular motor driving the stepwise translocation of polypeptide chains across the membrane. The protein is Protein translocase subunit SecA of Salmonella typhi.